Here is a 1288-residue protein sequence, read N- to C-terminus: MGSPEGRFHFAIDRGGTFTDVFAQCPGGHVRVLKLLSEDPANYADAPTEGIRRILEQEAGMLLPRDQPLDSSHIASIRMGTTVATNALLERKGERVALLVTRGFRDLLHIGTQARGDLFDLAVPMPEVLYEEVLEVDERVVLHRGEAGTGTPVKGRTGDLLEVQQPVDLGALRGKLEGLLSRGIRSLAVVLMHSYTWAQHEQQVGVLARELGFTHVSLSSEAMPMVRIVPRGHTACADAYLTPAIQRYVQGFCRGFQGQLKDVQVLFMRSDGGLAPMDTFSGSSAVLSGPAGGVVGYSATTYQQEGGQPVIGFDMGGTSTDVSRYAGEFEHVFEASTAGVTLQAPQLDINTVAAGGGSRLFFRSGLFVVGPESAGAHPGPACYRKGGPVTVTDANLVLGRLLPASFPCIFGPGENQPLSPEASRKALEAVATEVNSFLTNGPCPASPLSLEEVAMGFVRVANEAMCRPIRALTQARGHDPSAHVLACFGGAGGQHACAIARALGMDTVHIHRHSGLLSALGLALADVVHEAQEPCSLLYAPETFVQLDQRLSRLEEQCVDALQAQGFPRSQISTESFLHLRYQGTDCALMVSAHQHPATARSPRAGDFGAAFVERYMREFGFVIPERPVVVDDVRVRGTGRSGLRLEDAPKAQTGPPRVDKMTQCYFEGGYQETPVYLLAELGYGHKLHGPCLIIDSNSTILVEPGCQAEVTKTGDICISVGAEVPGTVGPQLDPIQLSIFSHRFMSIAEQMGRILQRTAISTNIKERLDFSCALFGPDGGLVSNAPHIPVHLGAMQETVQFQIQHLGADLHPGDVLLSNHPSAGGSHLPDLTVITPVFWPGQTRPVFYVASRGHHADIGGITPGSMPPHSTMLQQEGAVFLSFKLVQGGVFQEEAVTEALRAPGKVPNCSGTRNLHDNLSDLRAQVAANQKGIQLVGELIGQYGLDVVQAYMGHIQANAELAVRDMLRAFGTSRQARGLPLEVSSEDHMDDGSPIRLRVQISLSQGSAVFDFSGTGPEVFGNLNAPRAVTLSALIYCLRCLVGRDIPLNQGCLAPVRVVIPRGSILDPSPEAAVVGGNVLTSQRVVDVILGAFGACAASQGCMNNVTLGNAHMGYYETVAGGAGAGPSWHGRSGVHSHMTNTRITDPEILESRYPVILRRFELRRGSGGRGRFRGGDGVTRELLFREEALLSVLTERRAFRPYGLHGGEPGARGLNLLIRKNGRTVNLGGKTSVTVYPGDVFCLHTPGGGGYGDPEDPAPPPGSPPQALAFPEHGSVYEYRRAQEAV.

A Phosphothreonine modification is found at T151. Positions 1248–1272 (PGGGGYGDPEDPAPPPGSPPQALAF) are disordered. Residue S1265 is modified to Phosphoserine.

It belongs to the oxoprolinase family. As to quaternary structure, homodimer.

It is found in the cytoplasm. Its subcellular location is the cytosol. The catalysed reaction is 5-oxo-L-proline + ATP + 2 H2O = L-glutamate + ADP + phosphate + H(+). Catalyzes the cleavage of 5-oxo-L-proline to form L-glutamate coupled to the hydrolysis of ATP to ADP and inorganic phosphate. The sequence is that of 5-oxoprolinase from Homo sapiens (Human).